The chain runs to 314 residues: Melanoma-associated antigen 3 (314 aa).

Over residues 1–20 (MPLEQRSQHCKPEEGLEARG) the composition is skewed to basic and acidic residues. The segment at 1 to 99 (MPLEQRSQHC…QEEEGPSTFP (99 aa)) is disordered. Low complexity predominate over residues 21 to 44 (EALGLVGAQAPATEEQEAASSSST). Residues 65–87 (PQGASSLPTTMNYPLWSQSYEDS) are compositionally biased toward polar residues. The region spanning 109–308 (LSRKVAELVH…ISYPPLHEWV (200 aa)) is the MAGE domain.

Interacts with TRIM28. In terms of processing, ubiquitinated by the DCX(DCAF12) complex specifically recognizes the diglutamate (Glu-Glu) at the C-terminus, leading to its degradation. As to expression, expressed in many tumors of several types, such as melanoma, head and neck squamous cell carcinoma, lung carcinoma and breast carcinoma, but not in normal tissues except for testes and placenta. Never expressed in kidney tumors, Leukemias and lymphomas.

In terms of biological role, activator of ubiquitin ligase activity of RING-type zinc finger-containing E3 ubiquitin-protein ligases that acts as a repressor of autophagy. May enhance ubiquitin ligase activity of TRIM28 and stimulate p53/TP53 ubiquitination by TRIM28. Proposed to act through recruitment and/or stabilization of the Ubl-conjugating enzyme (E2) at the E3:substrate complex. May play a role in embryonal development and tumor transformation or aspects of tumor progression. In vitro promotes cell viability in melanoma cell lines. Antigen recognized on a melanoma by autologous cytolytic T-lymphocytes. In Homo sapiens (Human), this protein is Melanoma-associated antigen 3.